Reading from the N-terminus, the 485-residue chain is MAYIIQGETGDWEIVIGLEVHAQVISKAKLFSGAATEFGAEPNTQVSFIDAGFPGMLPVINEVCVEQAVRTGLGLKAKINLTSVFARKNYFYADLPQGYQISQYDQPIVGEGELILDLPDGGTRTVGIERLHLEQDAGKSIHDMHPSKSFIDLNRSGVALMEIVSKPDLRSPEEAGLYLTKLRSILRYLETCDGNMQEGSMRCDANVSVRPVGSTELRTRCEIKNVNSIRFVQQAIEFEARRHIDVYESGGEIRQETRLFDSVKGETRSMRSKEHAHDYRYFPDPDLLPLVIEQSFVDGIKSGLPELPDEKKARFMAEYGLNAYDAGVLVAEKASAEFFETVAKGRDSKMACNWVMGDFFASLNATGKTIENPPVTAANLGQLIDLIKDGTLSGRLAKDVFALMVETGKAPAVLVEERGLKQVTDTGAIEAAVDAVISANPDKVQQVKDGKTALLGWFTGQVMKSTQGKANPAMVNEMLSKKILG.

Belongs to the GatB/GatE family. GatB subfamily. As to quaternary structure, heterotrimer of A, B and C subunits.

It carries out the reaction L-glutamyl-tRNA(Gln) + L-glutamine + ATP + H2O = L-glutaminyl-tRNA(Gln) + L-glutamate + ADP + phosphate + H(+). The enzyme catalyses L-aspartyl-tRNA(Asn) + L-glutamine + ATP + H2O = L-asparaginyl-tRNA(Asn) + L-glutamate + ADP + phosphate + 2 H(+). In terms of biological role, allows the formation of correctly charged Asn-tRNA(Asn) or Gln-tRNA(Gln) through the transamidation of misacylated Asp-tRNA(Asn) or Glu-tRNA(Gln) in organisms which lack either or both of asparaginyl-tRNA or glutaminyl-tRNA synthetases. The reaction takes place in the presence of glutamine and ATP through an activated phospho-Asp-tRNA(Asn) or phospho-Glu-tRNA(Gln). This chain is Aspartyl/glutamyl-tRNA(Asn/Gln) amidotransferase subunit B, found in Paramagnetospirillum magneticum (strain ATCC 700264 / AMB-1) (Magnetospirillum magneticum).